Reading from the N-terminus, the 311-residue chain is Purine nucleoside phosphorylase (311 aa).

Ser2 carries the post-translational modification N-acetylserine. Phosphate contacts are provided by residues Ser46, His81, 101–103 (RLH), and Ala134. Residue Glu219 coordinates a purine D-ribonucleoside. Phosphate is bound at residue Ser238. A purine D-ribonucleoside is bound at residue Asn261. Phosphoserine is present on Ser275.

This sequence belongs to the PNP/MTAP phosphorylase family.

The catalysed reaction is a purine D-ribonucleoside + phosphate = a purine nucleobase + alpha-D-ribose 1-phosphate. It participates in purine metabolism; purine nucleoside salvage. The purine nucleoside phosphorylases catalyze the phosphorolytic breakdown of the N-glycosidic bond in the beta-(deoxy)ribonucleoside molecules, with the formation of the corresponding free purine bases and pentose-1-phosphate. Cleaves guanosine and inosine. The chain is Purine nucleoside phosphorylase (PNP1) from Saccharomyces cerevisiae (strain ATCC 204508 / S288c) (Baker's yeast).